The sequence spans 208 residues: ATP-dependent Clp protease proteolytic subunit (208 aa).

Ser101 functions as the Nucleophile in the catalytic mechanism. The active site involves His126.

Belongs to the peptidase S14 family. In terms of assembly, component of the chloroplastic Clp protease core complex.

Its subcellular location is the plastid. The protein localises to the chloroplast stroma. The catalysed reaction is Hydrolysis of proteins to small peptides in the presence of ATP and magnesium. alpha-casein is the usual test substrate. In the absence of ATP, only oligopeptides shorter than five residues are hydrolyzed (such as succinyl-Leu-Tyr-|-NHMec, and Leu-Tyr-Leu-|-Tyr-Trp, in which cleavage of the -Tyr-|-Leu- and -Tyr-|-Trp bonds also occurs).. Its function is as follows. Cleaves peptides in various proteins in a process that requires ATP hydrolysis. Has a chymotrypsin-like activity. Plays a major role in the degradation of misfolded proteins. This is ATP-dependent Clp protease proteolytic subunit from Nephroselmis olivacea (Green alga).